Consider the following 270-residue polypeptide: UPF0354 protein BCG9842_B0431 (270 aa).

It belongs to the UPF0354 family.

This is UPF0354 protein BCG9842_B0431 from Bacillus cereus (strain G9842).